Consider the following 140-residue polypeptide: uncharacterized protein (140 aa).

The segment at 121-140 (EEVKNGELIDPNVTTEDEKL) is disordered.

This is an uncharacterized protein from Schizosaccharomyces pombe (strain 972 / ATCC 24843) (Fission yeast).